A 251-amino-acid chain; its full sequence is uncharacterized protein (251 aa).

The a divalent metal cation site is built by H5, H7, E101, H132, H163, and D209.

This sequence belongs to the metallo-dependent hydrolases superfamily. TatD-type hydrolase family. Requires a divalent metal cation as cofactor.

This is an uncharacterized protein from Methanocaldococcus jannaschii (strain ATCC 43067 / DSM 2661 / JAL-1 / JCM 10045 / NBRC 100440) (Methanococcus jannaschii).